Consider the following 215-residue polypeptide: Probable transaldolase (215 aa).

K83 serves as the catalytic Schiff-base intermediate with substrate.

The protein belongs to the transaldolase family. Type 3B subfamily.

It is found in the cytoplasm. It carries out the reaction D-sedoheptulose 7-phosphate + D-glyceraldehyde 3-phosphate = D-erythrose 4-phosphate + beta-D-fructose 6-phosphate. Its pathway is carbohydrate degradation; pentose phosphate pathway; D-glyceraldehyde 3-phosphate and beta-D-fructose 6-phosphate from D-ribose 5-phosphate and D-xylulose 5-phosphate (non-oxidative stage): step 2/3. Functionally, transaldolase is important for the balance of metabolites in the pentose-phosphate pathway. The polypeptide is Probable transaldolase (Clostridium kluyveri (strain NBRC 12016)).